Here is a 460-residue protein sequence, read N- to C-terminus: Phosphomethylpyrimidine synthase (460 aa).

Substrate-binding positions include Asn-80, Met-109, Tyr-139, His-175, 195–197 (SRG), 236–239 (DSLR), and Glu-275. His-279 serves as a coordination point for Zn(2+). Tyr-302 lines the substrate pocket. Residue His-343 participates in Zn(2+) binding. [4Fe-4S] cluster contacts are provided by Cys-423, Cys-426, and Cys-431.

Belongs to the ThiC family. [4Fe-4S] cluster serves as cofactor.

The enzyme catalyses 5-amino-1-(5-phospho-beta-D-ribosyl)imidazole + S-adenosyl-L-methionine = 4-amino-2-methyl-5-(phosphooxymethyl)pyrimidine + CO + 5'-deoxyadenosine + formate + L-methionine + 3 H(+). Its pathway is cofactor biosynthesis; thiamine diphosphate biosynthesis. In terms of biological role, catalyzes the synthesis of the hydroxymethylpyrimidine phosphate (HMP-P) moiety of thiamine from aminoimidazole ribotide (AIR) in a radical S-adenosyl-L-methionine (SAM)-dependent reaction. This is Phosphomethylpyrimidine synthase from Microcystis aeruginosa (strain NIES-843 / IAM M-2473).